A 355-amino-acid polypeptide reads, in one-letter code: Protein RecA (355 aa).

An ATP-binding site is contributed by Gly67–Thr74. Residues Asn331 to Phe355 form a disordered region.

The protein belongs to the RecA family.

It is found in the cytoplasm. Its function is as follows. Can catalyze the hydrolysis of ATP in the presence of single-stranded DNA, the ATP-dependent uptake of single-stranded DNA by duplex DNA, and the ATP-dependent hybridization of homologous single-stranded DNAs. It interacts with LexA causing its activation and leading to its autocatalytic cleavage. This is Protein RecA from Erwinia tasmaniensis (strain DSM 17950 / CFBP 7177 / CIP 109463 / NCPPB 4357 / Et1/99).